Reading from the N-terminus, the 277-residue chain is Phosphatidylglycerol--prolipoprotein diacylglyceryl transferase (277 aa).

The next 4 helical transmembrane spans lie at I18 to A38, I51 to Y71, I89 to I109, and I116 to G136. An a 1,2-diacyl-sn-glycero-3-phospho-(1'-sn-glycerol)-binding site is contributed by R137. The next 3 membrane-spanning stretches (helical) occupy residues Q177–I197, G205–M225, and F235–Y255.

It belongs to the Lgt family.

Its subcellular location is the cell membrane. It carries out the reaction L-cysteinyl-[prolipoprotein] + a 1,2-diacyl-sn-glycero-3-phospho-(1'-sn-glycerol) = an S-1,2-diacyl-sn-glyceryl-L-cysteinyl-[prolipoprotein] + sn-glycerol 1-phosphate + H(+). Its pathway is protein modification; lipoprotein biosynthesis (diacylglyceryl transfer). Its function is as follows. Catalyzes the transfer of the diacylglyceryl group from phosphatidylglycerol to the sulfhydryl group of the N-terminal cysteine of a prolipoprotein, the first step in the formation of mature lipoproteins. The sequence is that of Phosphatidylglycerol--prolipoprotein diacylglyceryl transferase from Listeria monocytogenes serovar 1/2a (strain ATCC BAA-679 / EGD-e).